A 590-amino-acid polypeptide reads, in one-letter code: MEDIKTTWQKIIADTLNGIAPETCDKILPEQINIETPPNPEMGDVAFPLFTFAKSFKSSPAKIASDVCARLLENEDIKKYGMPKAIGPYLNVFLAKGDLASNVLDKVLKEKENYGKTSSLSGKRIMIEFSSPNTNKPLHLGHLRNDALGESISRILKFCGADVFKVNIINDRGVHICKSMIAYQKFGEGKTPESENIKSDRFVGDMYVAFHKYSQENPEKAEAEAKQMLLDWEAGENKELIGLWKKMNGWAIEGIKETYKRTGISFDKLYFESETYLKGKDQILKGLEAGVFYKEEDGSVWVDLAPIKLDKKVLLRSDGTSLYMTQDIGTAISRHKDWPFNQMIYVVGNEQEYHFKVLFYVLKQLGFEWADDLYHLSYGMVNLPEGKMKSREGTVVDADDLINSLQDEALKKIEENGREKEVGDAAVAAENIAVGALHYFLLQVSPKKDMLFNPKESLSFTGNTGPYLQYMGARISSILRKAETAEGKEKLKDGKLNASLLTNESEWELLKTLEDFPEQVERSALRKDPSALTAYLYELSKAFSRFYRDCPILSGEDADLSYTRMELARATKIVLQNAMNLVLIPFMEVM.

Residues 132-142 (PNTNKPLHLGH) carry the 'HIGH' region motif.

Belongs to the class-I aminoacyl-tRNA synthetase family. Monomer.

Its subcellular location is the cytoplasm. The enzyme catalyses tRNA(Arg) + L-arginine + ATP = L-arginyl-tRNA(Arg) + AMP + diphosphate. This Treponema denticola (strain ATCC 35405 / DSM 14222 / CIP 103919 / JCM 8153 / KCTC 15104) protein is Arginine--tRNA ligase.